The sequence spans 1274 residues: Mediator of RNA polymerase II transcription subunit 14 (1274 aa).

Disordered regions lie at residues 1-40 (MENGHMNGVRTHHDRNSWTNGVNGGVAKREGSPDKGKAHA), 1056-1142 (LVGT…LHTQ), and 1155-1274 (AQRQ…VVID). Positions 27–37 (AKREGSPDKGK) are enriched in basic and acidic residues. Polar residues predominate over residues 1075-1085 (QDLQQGPQKTP). A compositionally biased stretch (low complexity) spans 1090-1104 (AAQAAQAAQAAQAAQ). The span at 1108 to 1119 (PQRPKQQPPTPS) shows a compositional bias: pro residues. 3 stretches are compositionally biased toward low complexity: residues 1120-1142 (QPQQQHRNVNQPQAQAQPQLHTQ), 1155-1172 (AQRQAQARANNSSNNNNT), and 1183-1252 (PQQR…PQGQ). Residues 1253-1265 (PGHGGGANGGMGG) are compositionally biased toward gly residues.

Belongs to the Mediator complex subunit 14 family. As to quaternary structure, component of the Mediator complex.

It is found in the nucleus. Component of the Mediator complex, a coactivator involved in the regulated transcription of nearly all RNA polymerase II-dependent genes. Mediator functions as a bridge to convey information from gene-specific regulatory proteins to the basal RNA polymerase II transcription machinery. Mediator is recruited to promoters by direct interactions with regulatory proteins and serves as a scaffold for the assembly of a functional preinitiation complex with RNA polymerase II and the general transcription factors. The protein is Mediator of RNA polymerase II transcription subunit 14 (rgr1) of Neurospora crassa (strain ATCC 24698 / 74-OR23-1A / CBS 708.71 / DSM 1257 / FGSC 987).